The chain runs to 353 residues: Protein RecA (353 aa).

Glycine 73 to threonine 80 contacts ATP.

The protein belongs to the RecA family.

The protein localises to the cytoplasm. In terms of biological role, can catalyze the hydrolysis of ATP in the presence of single-stranded DNA, the ATP-dependent uptake of single-stranded DNA by duplex DNA, and the ATP-dependent hybridization of homologous single-stranded DNAs. It interacts with LexA causing its activation and leading to its autocatalytic cleavage. This Bordetella avium (strain 197N) protein is Protein RecA.